The chain runs to 270 residues: UPF0354 protein BCG9842_B0431 (270 aa).

The protein belongs to the UPF0354 family.

This Bacillus cereus (strain G9842) protein is UPF0354 protein BCG9842_B0431.